Consider the following 101-residue polypeptide: Doublesex- and mab-3-related transcription factor 1 (101 aa).

The segment at residues 1 to 13 is a DNA-binding region (DM); sequence SLIAERQRVMAAQ. The segment covering 52–75 has biased composition (low complexity); it reads CLLLESSSPTHSTSTVTTVSTSPS. The tract at residues 52–79 is disordered; that stretch reads CLLLESSSPTHSTSTVTTVSTSPSEGRM.

The protein belongs to the DMRT family.

It localises to the nucleus. Functionally, may be required for testis development. The chain is Doublesex- and mab-3-related transcription factor 1 (DMRT1) from Alligator mississippiensis (American alligator).